A 276-amino-acid polypeptide reads, in one-letter code: MHPAAEDSPLGKSSEYLDTYTPSLLFPIPRAPKWAELGLAAENLPYRGVDVWNCYELSWLLPSGKPVVAVGEFVIPADSPNIVESKSFKLYLNSLNQTVFADREALRQTLARDLSAATGAPVAVRLRSLGEVQEQGVAALPGQCIDELDVTIGRYGQPSAELLRCDPARRVEQVLHSHLLKSNCPVTGQPDWGSLVVDYHGPALDPASLLAYVVSFRQHADFHEQCVERIFLDLLRLLEPGRLTVYARYVRRGGLDINPWRSTGAVVADNRRLARQ.

Position 83 to 85 (valine 83 to serine 85) interacts with substrate. Serine 85 to lysine 86 contacts NADPH. The active-site Thioimide intermediate is the cysteine 184. Aspartate 191 acts as the Proton donor in catalysis. Histidine 223–glutamate 224 serves as a coordination point for substrate. Arginine 252 to glycine 253 contributes to the NADPH binding site.

This sequence belongs to the GTP cyclohydrolase I family. QueF type 2 subfamily. As to quaternary structure, homodimer.

It localises to the cytoplasm. It carries out the reaction 7-aminomethyl-7-carbaguanine + 2 NADP(+) = 7-cyano-7-deazaguanine + 2 NADPH + 3 H(+). It functions in the pathway tRNA modification; tRNA-queuosine biosynthesis. Its function is as follows. Catalyzes the NADPH-dependent reduction of 7-cyano-7-deazaguanine (preQ0) to 7-aminomethyl-7-deazaguanine (preQ1). This Azotobacter vinelandii (strain DJ / ATCC BAA-1303) protein is NADPH-dependent 7-cyano-7-deazaguanine reductase.